The primary structure comprises 701 residues: Glycine--tRNA ligase beta subunit (701 aa).

This sequence belongs to the class-II aminoacyl-tRNA synthetase family. In terms of assembly, tetramer of two alpha and two beta subunits.

Its subcellular location is the cytoplasm. The enzyme catalyses tRNA(Gly) + glycine + ATP = glycyl-tRNA(Gly) + AMP + diphosphate. The protein is Glycine--tRNA ligase beta subunit of Anaeromyxobacter dehalogenans (strain 2CP-C).